The following is a 92-amino-acid chain: UPF0223 protein SERP0684 (92 aa).

Belongs to the UPF0223 family.

This chain is UPF0223 protein SERP0684, found in Staphylococcus epidermidis (strain ATCC 35984 / DSM 28319 / BCRC 17069 / CCUG 31568 / BM 3577 / RP62A).